A 460-amino-acid chain; its full sequence is Cysteine--tRNA ligase (460 aa).

Cys28 serves as a coordination point for Zn(2+). A 'HIGH' region motif is present at residues 30–40 (MTVYDYCHLGH). Zn(2+) is bound by residues Cys209, His234, and Glu238. The short motif at 266 to 270 (KMSKS) is the 'KMSKS' region element. Lys269 is a binding site for ATP.

Belongs to the class-I aminoacyl-tRNA synthetase family. As to quaternary structure, monomer. The cofactor is Zn(2+).

The protein localises to the cytoplasm. It carries out the reaction tRNA(Cys) + L-cysteine + ATP = L-cysteinyl-tRNA(Cys) + AMP + diphosphate. This is Cysteine--tRNA ligase from Thioalkalivibrio sulfidiphilus (strain HL-EbGR7).